Here is a 70-residue protein sequence, read N- to C-terminus: Brevinin-ALb (70 aa).

The first 22 residues, 1–22, serve as a signal peptide directing secretion; the sequence is MFTLKKSLLLLFFLGTINLSLC. The propeptide occupies 23-46; the sequence is EQERDADEEERRDDDEMDVEVEKR. Cysteines 64 and 70 form a disulfide.

As to expression, expressed by the skin glands.

The protein localises to the secreted. Its function is as follows. Antimicrobial peptide with activity against Gram-positive and Gram-negative bacteria and against fungi. Has been tested against S.aureus (MIC=5.5 ug/mL), E.coli (MIC=6.5 ug/mL), B.dysenteriae (MIC=2.2 ug/mL), and C.albicans (MIC=7.5 ug/mL). Can regulate or mediate antimicrobial response by stimulating mast cell degranulation. Induces histamine release. Shows cytotoxicity toward solid tumor cell line HepG2. Also shows a potent hemolytic activity (LD(50)=5 ug/ml). This chain is Brevinin-ALb, found in Amolops loloensis (Lolokou Sucker Frog).